The sequence spans 182 residues: Superoxide dismutase [Cu-Zn] (182 aa).

The signal sequence occupies residues 1–19; it reads MFRTLTVVPLLALGLSLSA. Cys-20 carries N-palmitoyl cysteine lipidation. Residue Cys-20 is the site of S-diacylglycerol cysteine attachment. Residues His-69, His-71, and His-95 each coordinate Cu cation. Cys-76 and Cys-175 are joined by a disulfide. Positions 91–118 are disordered; the sequence is AAGGHFDPGASHNHDGPHARNDQGHGGD. His-95, His-104, His-115, and Asp-118 together coordinate Zn(2+). The span at 102 to 115 shows a compositional bias: basic and acidic residues; the sequence is HNHDGPHARNDQGH.

The protein belongs to the Cu-Zn superoxide dismutase family. Requires Cu cation as cofactor. Zn(2+) serves as cofactor.

The protein resides in the cell membrane. The enzyme catalyses 2 superoxide + 2 H(+) = H2O2 + O2. Destroys radicals which are normally produced within the cells and which are toxic to biological systems. The protein is Superoxide dismutase [Cu-Zn] (sodC) of Deinococcus radiodurans (strain ATCC 13939 / DSM 20539 / JCM 16871 / CCUG 27074 / LMG 4051 / NBRC 15346 / NCIMB 9279 / VKM B-1422 / R1).